A 152-amino-acid polypeptide reads, in one-letter code: Large ribosomal subunit protein bL9 (152 aa).

Belongs to the bacterial ribosomal protein bL9 family.

In terms of biological role, binds to the 23S rRNA. This chain is Large ribosomal subunit protein bL9, found in Prochlorococcus marinus (strain NATL1A).